The sequence spans 313 residues: tRNA dimethylallyltransferase (313 aa).

11-18 (GPTAGGKT) provides a ligand contact to ATP. Substrate is bound at residue 13–18 (TAGGKT). Interaction with substrate tRNA regions lie at residues 36–39 (DSAL), 160–164 (QRIGR), and 243–248 (RCVGYR).

It belongs to the IPP transferase family. Monomer. It depends on Mg(2+) as a cofactor.

The enzyme catalyses adenosine(37) in tRNA + dimethylallyl diphosphate = N(6)-dimethylallyladenosine(37) in tRNA + diphosphate. Functionally, catalyzes the transfer of a dimethylallyl group onto the adenine at position 37 in tRNAs that read codons beginning with uridine, leading to the formation of N6-(dimethylallyl)adenosine (i(6)A). The protein is tRNA dimethylallyltransferase of Neisseria meningitidis serogroup A / serotype 4A (strain DSM 15465 / Z2491).